A 924-amino-acid polypeptide reads, in one-letter code: Inositol polyphosphate 4-phosphatase type II (924 aa).

Over residues 1 to 13 the composition is skewed to basic and acidic residues; the sequence is MEIKEEGASEEGQ. Disordered stretches follow at residues 1 to 24, 481 to 516, and 546 to 570; these read MEIK…ANDP, ILKK…HSDY, and DGGS…AIPS. One can recognise a C2 domain in the interval 23-165; the sequence is DPGDCQFTSI…LKSKEQLLVL (143 aa).

This sequence belongs to the inositol 3,4-bisphosphate 4-phosphatase family. As to expression, widely expressed with highest levels occurring in the skeletal muscle and heart.

The enzyme catalyses a 1,2-diacyl-sn-glycero-3-phospho-(1D-myo-inositol-3,4-bisphosphate) + H2O = a 1,2-diacyl-sn-glycero-3-phospho-(1D-myo-inositol-3-phosphate) + phosphate. The catalysed reaction is 1D-myo-inositol 1,3,4-trisphosphate + H2O = 1D-myo-inositol 1,3-bisphosphate + phosphate. It carries out the reaction 1D-myo-inositol 3,4-bisphosphate + H2O = 1D-myo-inositol 3-phosphate + phosphate. The protein operates within signal transduction; phosphatidylinositol signaling pathway. Strongly inhibited by inositol hexakisphosphate. In terms of biological role, catalyzes the hydrolysis of the 4-position phosphate of phosphatidylinositol 3,4-bisphosphate, inositol 1,3,4-trisphosphate and inositol 3,4-trisphosphate. Plays a role in the late stages of macropinocytosis by dephosphorylating phosphatidylinositol 3,4-bisphosphate in membrane ruffles. The lipid phosphatase activity is critical for tumor suppressor function. Antagonizes the PI3K-AKT/PKB signaling pathway by dephosphorylating phosphoinositides and thereby modulating cell cycle progression and cell survival. In Homo sapiens (Human), this protein is Inositol polyphosphate 4-phosphatase type II (INPP4B).